We begin with the raw amino-acid sequence, 1409 residues long: DNA-directed RNA polymerase subunit beta' (1409 aa).

The Zn(2+) site is built by Cys70, Cys72, Cys85, and Cys88. Mg(2+)-binding residues include Asp461, Asp463, and Asp465. Zn(2+) contacts are provided by Cys820, Cys894, Cys901, and Cys904.

This sequence belongs to the RNA polymerase beta' chain family. As to quaternary structure, the RNAP catalytic core consists of 2 alpha, 1 beta, 1 beta' and 1 omega subunit. When a sigma factor is associated with the core the holoenzyme is formed, which can initiate transcription. Mg(2+) is required as a cofactor. It depends on Zn(2+) as a cofactor.

The enzyme catalyses RNA(n) + a ribonucleoside 5'-triphosphate = RNA(n+1) + diphosphate. In terms of biological role, DNA-dependent RNA polymerase catalyzes the transcription of DNA into RNA using the four ribonucleoside triphosphates as substrates. The polypeptide is DNA-directed RNA polymerase subunit beta' (Ralstonia nicotianae (strain ATCC BAA-1114 / GMI1000) (Ralstonia solanacearum)).